The sequence spans 104 residues: Gastrin (104 aa).

An N-terminal signal peptide occupies residues 1 to 21; that stretch reads MPRLCVCMLVLVLALATFSEA. Residues 22–58 constitute a propeptide that is removed on maturation; sequence SWKPRSQLQDASSGPRTNGALEQHQLEKLGPASHHRR. The segment at 23 to 104 is disordered; the sequence is WKPRSQLQDA…RSAEEEDQYN (82 aa). Polar residues predominate over residues 25–37; sequence PRSQLQDASSGPR. Tyr-87 carries the post-translational modification Sulfotyrosine. Phe-92 carries the post-translational modification Phenylalanine amide. Ser-96 carries the post-translational modification Phosphoserine. A propeptide spanning residues 96–104 is cleaved from the precursor; the sequence is SAEEEDQYN. Tyr-103 carries the sulfotyrosine modification.

It belongs to the gastrin/cholecystokinin family. In terms of processing, sulfation on Tyr-87 enhances proteolytic processing, and blocks peptide degradation. Levels of sulfation differ between proteolytically-cleaved gastrins and between tissues.

Its subcellular location is the secreted. Functionally, gastrin stimulates the stomach mucosa to produce and secrete hydrochloric acid and the pancreas to secrete its digestive enzymes. It also stimulates smooth muscle contraction and increases blood circulation and water secretion in the stomach and intestine. The protein is Gastrin (Gast) of Rattus norvegicus (Rat).